The sequence spans 417 residues: Serine hydroxymethyltransferase 2 (417 aa).

Residues leucine 121 and 125–127 (GHL) each bind (6S)-5,6,7,8-tetrahydrofolate. Position 229 is an N6-(pyridoxal phosphate)lysine (lysine 229). 354 to 356 (SPF) contacts (6S)-5,6,7,8-tetrahydrofolate.

It belongs to the SHMT family. In terms of assembly, homodimer. Pyridoxal 5'-phosphate serves as cofactor.

It is found in the cytoplasm. The enzyme catalyses (6R)-5,10-methylene-5,6,7,8-tetrahydrofolate + glycine + H2O = (6S)-5,6,7,8-tetrahydrofolate + L-serine. Its pathway is one-carbon metabolism; tetrahydrofolate interconversion. The protein operates within amino-acid biosynthesis; glycine biosynthesis; glycine from L-serine: step 1/1. Functionally, catalyzes the reversible interconversion of serine and glycine with tetrahydrofolate (THF) serving as the one-carbon carrier. This reaction serves as the major source of one-carbon groups required for the biosynthesis of purines, thymidylate, methionine, and other important biomolecules. Also exhibits THF-independent aldolase activity toward beta-hydroxyamino acids, producing glycine and aldehydes, via a retro-aldol mechanism. In Pseudomonas putida (strain ATCC 47054 / DSM 6125 / CFBP 8728 / NCIMB 11950 / KT2440), this protein is Serine hydroxymethyltransferase 2.